The primary structure comprises 394 residues: Succinate--CoA ligase [ADP-forming] subunit beta (394 aa).

ATP is bound by residues Lys-46, 53–55, Glu-99, Cys-102, and Glu-107; that span reads GRG. Mg(2+) contacts are provided by Asn-199 and Asp-213. Residues Asn-264 and 321-323 each bind substrate; that span reads GIV.

This sequence belongs to the succinate/malate CoA ligase beta subunit family. Heterotetramer of two alpha and two beta subunits. Mg(2+) is required as a cofactor.

It catalyses the reaction succinate + ATP + CoA = succinyl-CoA + ADP + phosphate. It carries out the reaction GTP + succinate + CoA = succinyl-CoA + GDP + phosphate. It participates in carbohydrate metabolism; tricarboxylic acid cycle; succinate from succinyl-CoA (ligase route): step 1/1. In terms of biological role, succinyl-CoA synthetase functions in the citric acid cycle (TCA), coupling the hydrolysis of succinyl-CoA to the synthesis of either ATP or GTP and thus represents the only step of substrate-level phosphorylation in the TCA. The beta subunit provides nucleotide specificity of the enzyme and binds the substrate succinate, while the binding sites for coenzyme A and phosphate are found in the alpha subunit. The sequence is that of Succinate--CoA ligase [ADP-forming] subunit beta from Haemophilus influenzae (strain PittGG).